The following is a 24-amino-acid chain: Brevinin-1Ra (24 aa).

A disulfide bridge connects residues cysteine 18 and cysteine 24.

As to expression, expressed by the skin glands.

The protein localises to the secreted. Its function is as follows. Antimicrobial peptide. This Pelophylax ridibundus (Marsh frog) protein is Brevinin-1Ra.